The chain runs to 437 residues: uncharacterized protein (437 aa).

Composition is skewed to basic residues over residues Met-1 to Asn-29, Leu-81 to Val-91, and Arg-101 to Arg-118. 2 disordered regions span residues Met-1–His-31 and Glu-77–Arg-437. The span at His-119–Leu-132 shows a compositional bias: basic and acidic residues. The segment covering Arg-133–Arg-142 has biased composition (basic residues). Positions His-143–Arg-164 are enriched in basic and acidic residues. The span at His-165–Gln-190 shows a compositional bias: basic residues. Basic and acidic residues-rich tracts occupy residues Gly-198–Gly-209 and His-217–Arg-253. 2 stretches are compositionally biased toward basic residues: residues Thr-284–Gly-293 and Pro-324–His-348. A compositionally biased stretch (low complexity) spans Asp-371–Ala-382.

This is an uncharacterized protein from Haloferax lucentense (strain DSM 14919 / JCM 9276 / NCIMB 13854 / Aa 2.2) (Haloferax alicantei).